The chain runs to 160 residues: Large ribosomal subunit protein uL22c (160 aa).

The protein belongs to the universal ribosomal protein uL22 family. In terms of assembly, part of the 50S ribosomal subunit.

The protein localises to the plastid. Its subcellular location is the chloroplast. Functionally, this protein binds specifically to 23S rRNA. The globular domain of the protein is located near the polypeptide exit tunnel on the outside of the subunit, while an extended beta-hairpin is found that lines the wall of the exit tunnel in the center of the 70S ribosome. The sequence is that of Large ribosomal subunit protein uL22c (rpl22) from Capsella bursa-pastoris (Shepherd's purse).